The chain runs to 320 residues: Histidine decarboxylase proenzyme (320 aa).

A propeptide spanning residues 2 to 11 (NKNLEANRNR) is cleaved from the precursor. At serine 98 the chain carries Pyruvic acid (Ser). Glutamate 215 functions as the Proton donor in the catalytic mechanism.

In terms of assembly, the proenzyme is a hexamer of identical pi chains; each pi chain monomer is cleaved to form a small (or beta) chain and a large (or alpha) chain by non-hydrolytic self-catalysis. The cofactor is pyruvate.

It catalyses the reaction L-histidine + H(+) = histamine + CO2. This is Histidine decarboxylase proenzyme (hdc) from Clostridium perfringens (strain ATCC 13124 / DSM 756 / JCM 1290 / NCIMB 6125 / NCTC 8237 / Type A).